The sequence spans 383 residues: Glucose-1-phosphate adenylyltransferase (383 aa).

Residues Tyr-100, Gly-165, 180-181, and Ser-191 each bind alpha-D-glucose 1-phosphate; that span reads EK.

Belongs to the bacterial/plant glucose-1-phosphate adenylyltransferase family. In terms of assembly, homotetramer.

The enzyme catalyses alpha-D-glucose 1-phosphate + ATP + H(+) = ADP-alpha-D-glucose + diphosphate. It participates in glycan biosynthesis; glycogen biosynthesis. Its function is as follows. Involved in the biosynthesis of ADP-glucose, a building block required for the elongation reactions to produce glycogen. Catalyzes the reaction between ATP and alpha-D-glucose 1-phosphate (G1P) to produce pyrophosphate and ADP-Glc. The polypeptide is Glucose-1-phosphate adenylyltransferase (Clostridium kluyveri (strain ATCC 8527 / DSM 555 / NBRC 12016 / NCIMB 10680 / K1)).